The sequence spans 282 residues: MEAINEVIEEYETYLDLEGKSPNTIRMYSYYVRRYLEGGGELKARSALRFLAKLRREGYSNKSLNLVVQALRSYFRFEGYDEEAEKLRPPKVPKSLPKSLTREEVRKILSVIPPTKKRDRLIFLLLYGAGLRVSELCNLKKSDVDFERSLIIVRGGKGAKDRVVPIPAFLLEGIKAYLETRDDDSEYLIVEDRRERKDKLSPKTVWYLLKKYGDRAGIRVTPHMLRHSFATHMLENGVDIRAIQELLGHSNLSTTQIYTKVTVEHLRKAQEKARLIEGLIEK.

In terms of domain architecture, Core-binding (CB) spans Glu2–Gly79. Residues Ser95–Glu271 enclose the Tyr recombinase domain. Catalysis depends on residues Arg132, Lys157, His223, Arg226, and His249. Catalysis depends on Tyr258, which acts as the O-(3'-phospho-DNA)-tyrosine intermediate.

This sequence belongs to the 'phage' integrase family. XerA subfamily.

Its subcellular location is the cytoplasm. In terms of biological role, site-specific tyrosine recombinase, which acts by catalyzing the cutting and rejoining of the recombining DNA molecules. In Thermococcus onnurineus (strain NA1), this protein is Tyrosine recombinase XerA.